Reading from the N-terminus, the 157-residue chain is 2-C-methyl-D-erythritol 2,4-cyclodiphosphate synthase (157 aa).

D8 and H10 together coordinate a divalent metal cation. 4-CDP-2-C-methyl-D-erythritol 2-phosphate contacts are provided by residues 8–10 (DVH) and 34–35 (HS). Position 42 (H42) interacts with a divalent metal cation. Residues 56 to 58 (DIG), 61 to 65 (FPDTD), 100 to 106 (AQAPKMA), 132 to 135 (TTTE), F139, and R142 contribute to the 4-CDP-2-C-methyl-D-erythritol 2-phosphate site.

Belongs to the IspF family. As to quaternary structure, homotrimer. The cofactor is a divalent metal cation.

The enzyme catalyses 4-CDP-2-C-methyl-D-erythritol 2-phosphate = 2-C-methyl-D-erythritol 2,4-cyclic diphosphate + CMP. The protein operates within isoprenoid biosynthesis; isopentenyl diphosphate biosynthesis via DXP pathway; isopentenyl diphosphate from 1-deoxy-D-xylulose 5-phosphate: step 4/6. In terms of biological role, involved in the biosynthesis of isopentenyl diphosphate (IPP) and dimethylallyl diphosphate (DMAPP), two major building blocks of isoprenoid compounds. Catalyzes the conversion of 4-diphosphocytidyl-2-C-methyl-D-erythritol 2-phosphate (CDP-ME2P) to 2-C-methyl-D-erythritol 2,4-cyclodiphosphate (ME-CPP) with a corresponding release of cytidine 5-monophosphate (CMP). This Pseudomonas fluorescens (strain Pf0-1) protein is 2-C-methyl-D-erythritol 2,4-cyclodiphosphate synthase.